A 292-amino-acid chain; its full sequence is NAD-dependent protein deacetylase sir-2.4 (292 aa).

One can recognise a Deacetylase sirtuin-type domain in the interval 31-292; sequence IEKLRTLYNH…DEVPIPLKIS (262 aa). NAD(+) is bound by residues 56–75 and 116–119; these read GAGVSTGSKLPDFRGKQGVW and QNVD. Catalysis depends on H136, which acts as the Proton acceptor. Zn(2+)-binding residues include C144, C147, C163, and C169. Residues 216–218, 242–244, and V260 contribute to the NAD(+) site; these read GTS and NYQ.

It belongs to the sirtuin family. Class IV subfamily. Requires Zn(2+) as cofactor.

It catalyses the reaction N(6)-acetyl-L-lysyl-[protein] + NAD(+) + H2O = 2''-O-acetyl-ADP-D-ribose + nicotinamide + L-lysyl-[protein]. In terms of biological role, NAD-dependent protein deacetylase. The protein is NAD-dependent protein deacetylase sir-2.4 (sir-2.4) of Caenorhabditis elegans.